A 290-amino-acid chain; its full sequence is Undecaprenyl-diphosphatase 2 (290 aa).

The next 6 membrane-spanning stretches (helical) occupy residues 104–124 (WMVIVGTLPVAVLGYLGKDLI), 128–148 (LRNLWITATMLVLFSFVFILA), 174–194 (CLALIPGVSRSGGTVSAGLFL), 205–225 (SFLLAIPAVLASGLFSLPDAF), 237–257 (QLFVGTAIAFAVGYASIAWLL), and 268–288 (FALWRIPLGLAVMGLLAFGVL).

Belongs to the UppP family.

It localises to the cell membrane. It catalyses the reaction di-trans,octa-cis-undecaprenyl diphosphate + H2O = di-trans,octa-cis-undecaprenyl phosphate + phosphate + H(+). Functionally, catalyzes the dephosphorylation of undecaprenyl diphosphate (UPP). Confers resistance to bacitracin. This Corynebacterium jeikeium (strain K411) protein is Undecaprenyl-diphosphatase 2.